Here is a 558-residue protein sequence, read N- to C-terminus: Formate--tetrahydrofolate ligase (558 aa).

An ATP-binding site is contributed by 67-74; sequence TPAGEGKT.

This sequence belongs to the formate--tetrahydrofolate ligase family.

It carries out the reaction (6S)-5,6,7,8-tetrahydrofolate + formate + ATP = (6R)-10-formyltetrahydrofolate + ADP + phosphate. The protein operates within one-carbon metabolism; tetrahydrofolate interconversion. This is Formate--tetrahydrofolate ligase from Roseobacter denitrificans (strain ATCC 33942 / OCh 114) (Erythrobacter sp. (strain OCh 114)).